A 258-amino-acid chain; its full sequence is Hydroxyacylglutathione hydrolase (258 aa).

Zn(2+) is bound by residues H54, H56, D58, H59, H113, D138, and H176.

The protein belongs to the metallo-beta-lactamase superfamily. Glyoxalase II family. Monomer. Requires Zn(2+) as cofactor.

It catalyses the reaction an S-(2-hydroxyacyl)glutathione + H2O = a 2-hydroxy carboxylate + glutathione + H(+). It functions in the pathway secondary metabolite metabolism; methylglyoxal degradation; (R)-lactate from methylglyoxal: step 2/2. In terms of biological role, thiolesterase that catalyzes the hydrolysis of S-D-lactoyl-glutathione to form glutathione and D-lactic acid. In Synechococcus sp. (strain ATCC 27144 / PCC 6301 / SAUG 1402/1) (Anacystis nidulans), this protein is Hydroxyacylglutathione hydrolase.